The following is a 236-amino-acid chain: Ubiquinone biosynthesis O-methyltransferase (236 aa).

4 residues coordinate S-adenosyl-L-methionine: Arg36, Gly56, Asp77, and Met125.

The protein belongs to the methyltransferase superfamily. UbiG/COQ3 family.

The enzyme catalyses a 3-demethylubiquinol + S-adenosyl-L-methionine = a ubiquinol + S-adenosyl-L-homocysteine + H(+). The catalysed reaction is a 3-(all-trans-polyprenyl)benzene-1,2-diol + S-adenosyl-L-methionine = a 2-methoxy-6-(all-trans-polyprenyl)phenol + S-adenosyl-L-homocysteine + H(+). It functions in the pathway cofactor biosynthesis; ubiquinone biosynthesis. O-methyltransferase that catalyzes the 2 O-methylation steps in the ubiquinone biosynthetic pathway. This Haemophilus ducreyi (strain 35000HP / ATCC 700724) protein is Ubiquinone biosynthesis O-methyltransferase.